We begin with the raw amino-acid sequence, 160 residues long: MAPALWRACNGLMAAFFALAALVQVNDPDAEVWVVVYTIPAVLTLLVGLNPEVTGNVIWKSISAIHILFCTVWAVGLASYLLHRTQQNILHEEEGRELSGLVIITAWIILCHSSSKNPVGGRIQLAIAIVITLFPFISWVYIYINKEMRSSWPTHCKTVI.

The next 5 membrane-spanning stretches (helical) occupy residues 3–23 (PALW…AALV), 30–50 (AEVW…VGLN), 62–82 (ISAI…SYLL), 100–120 (GLVI…NPVG), and 125–145 (LAIA…IYIN).

It localises to the membrane. This chain is Transmembrane protein 220 (TMEM220), found in Homo sapiens (Human).